Reading from the N-terminus, the 200-residue chain is NADH-quinone oxidoreductase subunit C (200 aa).

This sequence belongs to the complex I 30 kDa subunit family. In terms of assembly, NDH-1 is composed of 14 different subunits. Subunits NuoB, C, D, E, F, and G constitute the peripheral sector of the complex.

It is found in the cell inner membrane. The enzyme catalyses a quinone + NADH + 5 H(+)(in) = a quinol + NAD(+) + 4 H(+)(out). Functionally, NDH-1 shuttles electrons from NADH, via FMN and iron-sulfur (Fe-S) centers, to quinones in the respiratory chain. The immediate electron acceptor for the enzyme in this species is believed to be ubiquinone. Couples the redox reaction to proton translocation (for every two electrons transferred, four hydrogen ions are translocated across the cytoplasmic membrane), and thus conserves the redox energy in a proton gradient. This is NADH-quinone oxidoreductase subunit C from Ralstonia nicotianae (strain ATCC BAA-1114 / GMI1000) (Ralstonia solanacearum).